The primary structure comprises 139 residues: Protein archease (139 aa).

The Ca(2+) site is built by aspartate 12, aspartate 138, and isoleucine 139.

This sequence belongs to the archease family.

Activates the tRNA-splicing ligase complex by facilitating the enzymatic turnover of catalytic subunit RtcB. Acts by promoting the guanylylation of RtcB, a key intermediate step in tRNA ligation. Can also alter the NTP specificity of RtcB such that ATP, dGTP or ITP is used efficiently. The chain is Protein archease from Saccharolobus islandicus (strain Y.N.15.51 / Yellowstone #2) (Sulfolobus islandicus).